The chain runs to 360 residues: Cannabinoid receptor 2 (360 aa).

Residues 1–33 (MAGCRELELTNGSNGGLEFNPMKEYMILSDAQQ) are Extracellular-facing. Residue N11 is glycosylated (N-linked (GlcNAc...) asparagine). The chain crosses the membrane as a helical span at residues 34-59 (IAVAVLCTLMGLLSALENVAVLYLIL). Residues 60 to 71 (SSQRLRRKPSYL) are Cytoplasmic-facing. A helical transmembrane segment spans residues 72–92 (FIGSLAGADFLASVIFACNFV). Over 93–104 (IFHVFHGVDSRN) the chain is Extracellular. Residues 105 to 129 (IFLLKIGSVTMTFTASVGSLLLTAV) form a helical membrane-spanning segment. The Cytoplasmic segment spans residues 130–149 (DRYLCLCYPPTYKALVTRGR). The helical transmembrane segment at 150-172 (ALVALGVMWVLSALISYLPLMGW) threads the bilayer. Over 173-188 (TCCPSPCSELFPLIPN) the chain is Extracellular. A helical membrane pass occupies residues 189-214 (DYLLGWLLFIAILFSGIIYTYGYVLW). Residues 215–246 (KAHQHVASLAEHQDRQVPGIARMRLDVRLAKT) lie on the Cytoplasmic side of the membrane. A helical transmembrane segment spans residues 247–267 (LGLVMAVLLICWFPALALMGH). Topologically, residues 268-279 (SLVTTLSDKVKE) are extracellular. A helical transmembrane segment spans residues 280 to 301 (AFAFCSMLCLVNSMINPIIYAL). At 302-360 (RSGEIRSAAQHCLTGWKKYLQGLGSEGKEEAPKSSVTETEAEVKTTTGPGSRTPGCSNC) the chain is on the cytoplasmic side. The segment at 327-360 (EGKEEAPKSSVTETEAEVKTTTGPGSRTPGCSNC) is disordered. A phosphoserine mark is found at S335 and S336. A Phosphothreonine modification is found at T338. Residues 349–360 (GPGSRTPGCSNC) are compositionally biased toward polar residues. The residue at position 352 (S352) is a Phosphoserine.

It belongs to the G-protein coupled receptor 1 family. Post-translationally, constitutively phosphorylated on Ser-352; phosphorylation increases cell internalization and desensitizes the receptor. Expressed in spleen and brain by neurons and glial cells (at protein level). Expressed in lung, testis and thymus but not in heart, liver or kidney. Expressed in cerebellum, cortex and brainstem.

Its subcellular location is the cell membrane. The protein localises to the cell projection. It localises to the dendrite. It is found in the perikaryon. Functionally, heterotrimeric G protein-coupled receptor for endocannabinoid 2-arachidonoylglycerol mediating inhibition of adenylate cyclase. May function in inflammatory response, nociceptive transmission and bone homeostasis. The chain is Cannabinoid receptor 2 (Cnr2) from Rattus norvegicus (Rat).